Here is a 569-residue protein sequence, read N- to C-terminus: Peroxisomal targeting signal receptor (569 aa).

Cys-9 is covalently cross-linked (Glycyl cysteine thioester (Cys-Gly) (interchain with G-Cter in ubiquitin)). An amphipathic helix 1 (AH1) region spans residues 10–32; that stretch reads AANANPLAQFFKQSQHDTSLEQS. Residue Lys-21 forms a Glycyl lysine isopeptide (Lys-Gly) (interchain with G-Cter in ubiquitin) linkage. Positions 23–42 are disordered; the sequence is SQHDTSLEQSLRNSAHDTHQ. Residues 57 to 72 are amphipathic helix 2 (AH2); that stretch reads RAHMEQFMNQSTPFNF. Short sequence motifs (wxxxF/Y motif) lie at residues 118 to 122 and 183 to 187; these read WSSEF and WEQQF. The amphipathic helix 4 (AH4) stretch occupies residues 218 to 234; it reads FDQVWDNIQETYADNML. A WxxxF/Y motif 3 motif is present at residues 243–247; it reads WEKDF. 7 TPR repeats span residues 272–305, 306–339, 340–377, 378–415, 416–449, 450–483, and 484–517; these read LDAYEIGIKLMESGAKLSEAALAFEAAVEQNPGH, VDAWLRLGQVQTQNEKELAGIAALEKCLELSPQN, LVALMTLAISYINEGYDNAAFATLERWIETKYPEVAER, ARNANPDIQADDRFSLNKRVTQLFIKAAQLSPEGANMD, SEVQTGLGVLFYSMEEYSKTLDCFQAAIEHNPND, ALAWNRLGASLANSNKPEQAIEAYSRTLQLNPNF, and VRARYNLGVSFINMGMYRDAVDHLLTGLSMHEVE.

Belongs to the peroxisomal targeting signal receptor family. As to quaternary structure, interacts (via WxxxF/Y and LVxEF motifs) with PEX14; promoting translocation through the PEX13-PEX14 docking complex. In terms of processing, monoubiquitinated at Cys-9 by PEX2 during PEX5 passage through the retrotranslocation channel: monoubiquitination acts as a signal for PEX5 extraction and is required for proper export from peroxisomes and recycling. When PEX5 recycling is compromised, polyubiquitinated at Lys-21 by PEX10 during its passage through the retrotranslocation channel, leading to its degradation.

Its subcellular location is the cytoplasm. The protein localises to the cytosol. The protein resides in the peroxisome matrix. Its function is as follows. Receptor that mediates peroxisomal import of proteins containing a C-terminal PTS1-type tripeptide peroxisomal targeting signal (SKL-type). Binds to cargo proteins containing a PTS1 peroxisomal targeting signal in the cytosol, and translocates them into the peroxisome matrix by passing through the PEX13-PEX14 docking complex along with cargo proteins. PEX5 receptor is then retrotranslocated into the cytosol, leading to release of bound cargo in the peroxisome matrix, and reset for a subsequent peroxisome import cycle. This is Peroxisomal targeting signal receptor (PEX5) from Pichia angusta (Yeast).